A 360-amino-acid chain; its full sequence is MSFLEIKGLHKHYGPVAALAGVDLDVASGSRTAIVGPSGCGKTTLLRLIAGFEAPDQGRIVLDGEVLANGGAAVPAHRRGIGVVAQDGALFPHLTIGDNIGFGMGRGDDKRAERIVELAYIVGLDKAILKRRPHELSGGQQQRVALARAMAMKPRLMLLDEPFSALDTGLRASMRKAVAELLEAAGITTILVTHDQAEALSFAAQVAVMRDGKFSQVGTPRDLYLKPKDRMIAEFLGDAIILPASISGGFANSPLGRIAVDTNDSRDVARILLRPEQIGLKRTSREGMSGTPDMLFGEVTESEFAGSTCTIAVRLLNNFDPPDAAAIGNTPLILRKSGMDAPAVGEIVRLTVSGKAHVFV.

Residues 4–236 (LEIKGLHKHY…PKDRMIAEFL (233 aa)) form the ABC transporter domain. Residue 36-43 (GPSGCGKT) coordinates ATP.

Belongs to the ABC transporter superfamily. Fe(3+) ion importer (TC 3.A.1.10) family. In terms of assembly, the complex is composed of two ATP-binding proteins (FbpC), two transmembrane proteins (FbpB) and a solute-binding protein (FbpA).

Its subcellular location is the cell inner membrane. It catalyses the reaction Fe(3+)(out) + ATP + H2O = Fe(3+)(in) + ADP + phosphate + H(+). Functionally, part of the ABC transporter complex FbpABC involved in Fe(3+) ions import. Responsible for energy coupling to the transport system. The polypeptide is Fe(3+) ions import ATP-binding protein FbpC (Mesorhizobium japonicum (strain LMG 29417 / CECT 9101 / MAFF 303099) (Mesorhizobium loti (strain MAFF 303099))).